We begin with the raw amino-acid sequence, 129 residues long: Phosphoribosyl-AMP cyclohydrolase (129 aa).

Asp-78 is a binding site for Mg(2+). Cys-79 contacts Zn(2+). Residues Asp-80 and Asp-82 each contribute to the Mg(2+) site. Residues Cys-96 and Cys-103 each contribute to the Zn(2+) site.

Belongs to the PRA-CH family. In terms of assembly, homodimer. Mg(2+) is required as a cofactor. The cofactor is Zn(2+).

It is found in the cytoplasm. The catalysed reaction is 1-(5-phospho-beta-D-ribosyl)-5'-AMP + H2O = 1-(5-phospho-beta-D-ribosyl)-5-[(5-phospho-beta-D-ribosylamino)methylideneamino]imidazole-4-carboxamide. Its pathway is amino-acid biosynthesis; L-histidine biosynthesis; L-histidine from 5-phospho-alpha-D-ribose 1-diphosphate: step 3/9. Its function is as follows. Catalyzes the hydrolysis of the adenine ring of phosphoribosyl-AMP. The chain is Phosphoribosyl-AMP cyclohydrolase from Nitrosomonas europaea (strain ATCC 19718 / CIP 103999 / KCTC 2705 / NBRC 14298).